Consider the following 354-residue polypeptide: Protein RecA (354 aa).

Residue 65–72 (GPESSGKT) coordinates ATP.

It belongs to the RecA family.

The protein localises to the cytoplasm. Its function is as follows. Can catalyze the hydrolysis of ATP in the presence of single-stranded DNA, the ATP-dependent uptake of single-stranded DNA by duplex DNA, and the ATP-dependent hybridization of homologous single-stranded DNAs. It interacts with LexA causing its activation and leading to its autocatalytic cleavage. This is Protein RecA from Pseudomonas savastanoi pv. phaseolicola (strain 1448A / Race 6) (Pseudomonas syringae pv. phaseolicola (strain 1448A / Race 6)).